Consider the following 285-residue polypeptide: Acrosomal protein SP-10 (285 aa).

Positions 1 to 21 are cleaved as a signal peptide; that stretch reads MNMFLLLMSLYLLGSARGTSG. A disordered region spans residues 64–200; the sequence is TLSEHGSSEH…GEQPSGAPIS (137 aa). 19 consecutive repeat copies span residues 66 to 70, 71 to 75, 85 to 89, 91 to 95, 110 to 114, 115 to 119, 120 to 124, 125 to 129, 130 to 134, 135 to 139, 145 to 149, 150 to 154, 155 to 159, 160 to 164, 165 to 169, 170 to 174, 175 to 179, 180 to 184, and 190 to 194. The tract at residues 66-95 is 3 X 5 AA repeats of S-E-H-[GA]-A; it reads SEHGSSEHGSREHTVAEHTPGEHAESEHAS. Residues 69–95 are compositionally biased toward basic and acidic residues; sequence GSSEHGSREHTVAEHTPGEHAESEHAS. Residues 85–184 are 7 X 5 AA repeats of S-G-E-H-[AL]; the sequence is PGEHAESEHA…SGEQSLGEHA (100 aa). A 9 X 5 AA repeats of [SV]-G-E-Q-[PSA] region spans residues 110–194; sequence VGEQPSGEQP…LSEKPSGEQP (85 aa). Asparagine 278 carries N-linked (GlcNAc...) asparagine glycosylation.

Testis.

The protein localises to the cytoplasmic vesicle. It localises to the secretory vesicle. It is found in the acrosome. This Papio hamadryas (Hamadryas baboon) protein is Acrosomal protein SP-10 (ACRV1).